A 172-amino-acid polypeptide reads, in one-letter code: C-phycocyanin beta chain (172 aa).

Asn72 bears the N4-methylasparagine mark. 2 residues coordinate (2R,3E)-phycocyanobilin: Cys82 and Cys153.

Belongs to the phycobiliprotein family. As to quaternary structure, heterodimer of an alpha and a beta subunit, which further assembles into trimers and the trimers into hexamers. The basic functional unit of phycobiliproteins is a ring-shaped hexamer formed from two back-to-back trimers contacting via the alpha chain subunits. The trimers are composed of alpha/beta subunit heterodimers arranged around a three-fold axis of symmetry. The phycoerythrins also contain a gamma subunit which is located in the center of the hexamer. In terms of processing, contains two covalently linked bilin chromophores.

The protein resides in the plastid. The protein localises to the chloroplast thylakoid membrane. In terms of biological role, light-harvesting photosynthetic bile pigment-protein from the phycobiliprotein complex (phycobilisome, PBS). Phycocyanin is the major phycobiliprotein in the PBS rod. The sequence is that of C-phycocyanin beta chain (cpcB) from Rhodella violacea (Red alga).